A 230-amino-acid chain; its full sequence is Transmembrane ascorbate ferrireductase 2 (230 aa).

The next 2 helical transmembrane spans lie at 5 to 25 (VLGGFPIFMVVRVLGFIIAAL) and 50 to 70 (VHPVMMVIGLILFNGEAMLAY). The 205-residue stretch at 14–218 (VVRVLGFIIA…LGGFVILGVV (205 aa)) folds into the Cytochrome b561 domain. Heme b is bound at residue H51. L-ascorbate contacts are provided by K77 and K81. A helical membrane pass occupies residues 82 to 102 (LVHLTLQLTAFILSLIGVWAA). Residue H84 coordinates heme b. 3 residues coordinate monodehydro-L-ascorbate radical: F105, H106, and Y115. Heme b is bound at residue H118. Residues 120–140 (WLGLACLFLFAFQWAAGFVTY) traverse the membrane as a helical segment. Y140, R150, and A151 together coordinate L-ascorbate. H157 contributes to the heme b binding site. The chain crosses the membrane as a helical span at residues 157-177 (HVFLGISIYALALVTATTGIL). F182 and N186 together coordinate monodehydro-L-ascorbate radical. The helical transmembrane segment at 198–218 (LVNTMGVLILILGGFVILGVV) threads the bilayer.

In terms of assembly, homodimer. It depends on heme b as a cofactor. In terms of tissue distribution, expressed in roots, seedlings, leaves and flowers. Expressed in the L1 layer of the shoot apex, in the epidermis of leaf primordia and young leaves and in vascular bundles. In the differentiation zone of the root, detected in the pericycle and in the epidermis, but not in the cortex. Strongly expressed in the cortical region of the root tip, in the meristematic tissue and in the epidermal cell layer of lateral roots, but not in the root caps. Highly expressed in unfertilized ovules. In mature embryos, expressed in the epidermis, cotyledon tips and root tips.

It is found in the membrane. It catalyses the reaction Fe(3+)(out) + L-ascorbate(in) = monodehydro-L-ascorbate radical(in) + Fe(2+)(out) + H(+). In terms of biological role, two-heme-containing cytochrome. Catalyzes ascorbate-dependent transmembrane ferric-chelate reduction. This chain is Transmembrane ascorbate ferrireductase 2 (CYB561B), found in Arabidopsis thaliana (Mouse-ear cress).